Reading from the N-terminus, the 929-residue chain is Dual specificity protein phosphatase PHS1 (929 aa).

Disordered regions lie at residues M1 to D27 and P545 to S618. 2 stretches are compositionally biased toward basic and acidic residues: residues H552–M580 and E591–H606. Residues K703–G848 enclose the Tyrosine-protein phosphatase domain. The Phosphocysteine intermediate role is filled by C792. A substrate-binding site is contributed by C792–R798. A Nuclear export signal motif is present at residues Q903–L911.

As to quaternary structure, interacts with MPK18. In terms of tissue distribution, expressed in roots, leaves and flowers.

It localises to the cytoplasm. The catalysed reaction is O-phospho-L-seryl-[protein] + H2O = L-seryl-[protein] + phosphate. It catalyses the reaction O-phospho-L-threonyl-[protein] + H2O = L-threonyl-[protein] + phosphate. The enzyme catalyses O-phospho-L-tyrosyl-[protein] + H2O = L-tyrosyl-[protein] + phosphate. Functionally, probable dual specificity phosphatase that binds and dephosphorylates MPK18, modulating the organization and dynamics of cortical microtubules. Acts as a negative regulator of abscisic acid (ABA) signaling during seed germination and light-induced stomata aperture. This is Dual specificity protein phosphatase PHS1 (PHS1) from Arabidopsis thaliana (Mouse-ear cress).